Consider the following 494-residue polypeptide: Alpha-amylase (494 aa).

An N-terminal signal peptide occupies residues 1-26 (MQISKAALLASLAALVYAQPVTLFKR). A disulfide bond links C57 and C65. Position 110 (W110) interacts with substrate. N148 contributes to the Ca(2+) binding site. H149 serves as a coordination point for substrate. A disulfide bridge links C177 with C191. Residue D202 participates in Ca(2+) binding. N-linked (GlcNAc...) asparagine glycosylation occurs at N224. R231 is a substrate binding site. D233, H237, and E257 together coordinate Ca(2+). Residue D233 is the Nucleophile of the active site. 236–237 (KH) is a substrate binding site. The active-site Proton donor is the E257. A substrate-binding site is contributed by G261. Residues C267 and C310 are joined by a disulfide bond. Residues D324 and R371 each contribute to the substrate site. C462 and C493 are oxidised to a cystine.

This sequence belongs to the glycosyl hydrolase 13 family. Ca(2+) serves as cofactor.

It localises to the secreted. It carries out the reaction Endohydrolysis of (1-&gt;4)-alpha-D-glucosidic linkages in polysaccharides containing three or more (1-&gt;4)-alpha-linked D-glucose units.. In Saccharomycopsis fibuligera (Yeast), this protein is Alpha-amylase (ALP1).